A 273-amino-acid polypeptide reads, in one-letter code: Beta-lactamase OXA-133 (273 aa).

Residues 1 to 17 form the signal peptide; it reads MNKYFTCYVVASLFFSG. Cys18 carries N-palmitoyl cysteine lipidation. Cys18 is lipidated: S-diacylglycerol cysteine. The active-site Acyl-ester intermediate is the Ser79. Residue Lys82 is modified to N6-carboxylysine. 216-218 contacts substrate; sequence KTG.

It belongs to the class-D beta-lactamase family.

It localises to the cell membrane. The catalysed reaction is a beta-lactam + H2O = a substituted beta-amino acid. Functionally, catalyzes the hydrolysis of beta-lactam antibiotics. This Acinetobacter radioresistens protein is Beta-lactamase OXA-133.